The chain runs to 464 residues: Putative major capsid protein (464 aa).

Positions 1-20 (MTEKKNTERQLTSVQEEVIK) are excised as a propeptide. A helical transmembrane segment spans residues 423-445 (LAQVNASVTFAVLWYGALALRAP).

The protein localises to the virion. The protein resides in the host membrane. In Enterococcus faecalis (Streptococcus faecalis), this protein is Putative major capsid protein.